We begin with the raw amino-acid sequence, 502 residues long: Lysine--tRNA ligase (502 aa).

Mg(2+) contacts are provided by glutamate 398 and glutamate 405.

Belongs to the class-II aminoacyl-tRNA synthetase family. Homodimer. Mg(2+) is required as a cofactor.

The protein localises to the cytoplasm. The enzyme catalyses tRNA(Lys) + L-lysine + ATP = L-lysyl-tRNA(Lys) + AMP + diphosphate. This chain is Lysine--tRNA ligase (lysS), found in Thermotoga maritima (strain ATCC 43589 / DSM 3109 / JCM 10099 / NBRC 100826 / MSB8).